The following is a 448-amino-acid chain: 3-phosphoshikimate 1-carboxyvinyltransferase (448 aa).

Positions 38, 39, and 43 each coordinate 3-phosphoshikimate. Lys38 provides a ligand contact to phosphoenolpyruvate. Phosphoenolpyruvate-binding residues include Gly111 and Arg140. 3-phosphoshikimate is bound by residues Ser185, Gln187, Asp335, and Lys362. Gln187 provides a ligand contact to phosphoenolpyruvate. The active-site Proton acceptor is Asp335. Positions 366 and 408 each coordinate phosphoenolpyruvate.

This sequence belongs to the EPSP synthase family. Monomer.

It is found in the cytoplasm. The enzyme catalyses 3-phosphoshikimate + phosphoenolpyruvate = 5-O-(1-carboxyvinyl)-3-phosphoshikimate + phosphate. The protein operates within metabolic intermediate biosynthesis; chorismate biosynthesis; chorismate from D-erythrose 4-phosphate and phosphoenolpyruvate: step 6/7. Catalyzes the transfer of the enolpyruvyl moiety of phosphoenolpyruvate (PEP) to the 5-hydroxyl of shikimate-3-phosphate (S3P) to produce enolpyruvyl shikimate-3-phosphate and inorganic phosphate. The sequence is that of 3-phosphoshikimate 1-carboxyvinyltransferase from Synechococcus elongatus (strain ATCC 33912 / PCC 7942 / FACHB-805) (Anacystis nidulans R2).